A 341-amino-acid polypeptide reads, in one-letter code: L-threonine 3-dehydrogenase (341 aa).

Cys38 contributes to the Zn(2+) binding site. Active-site charge relay system residues include Thr40 and His43. Residues His63, Glu64, Cys93, Cys96, Cys99, and Cys107 each contribute to the Zn(2+) site. Residues Ile175, Asp195, Arg200, 262 to 264 (LGI), and 286 to 287 (IY) each bind NAD(+).

It belongs to the zinc-containing alcohol dehydrogenase family. As to quaternary structure, homotetramer. The cofactor is Zn(2+).

Its subcellular location is the cytoplasm. The enzyme catalyses L-threonine + NAD(+) = (2S)-2-amino-3-oxobutanoate + NADH + H(+). It participates in amino-acid degradation; L-threonine degradation via oxydo-reductase pathway; glycine from L-threonine: step 1/2. Its function is as follows. Catalyzes the NAD(+)-dependent oxidation of L-threonine to 2-amino-3-ketobutyrate. This is L-threonine 3-dehydrogenase from Klebsiella pneumoniae (strain 342).